Consider the following 309-residue polypeptide: NADH-cytochrome b5 reductase 1 (309 aa).

Residues 30 to 50 form a helical membrane-spanning segment; it reads FVPYAVAVTAILAGLKLFTGG. The region spanning 60–165 is the FAD-binding FR-type domain; that stretch reads TEFQEFVLKE…RGPKGAMVYT (106 aa). Residues 145-160 and 171-208 contribute to the FAD site; these read TTLK…GPKG and HIGM…KLDL.

The protein belongs to the flavoprotein pyridine nucleotide cytochrome reductase family. As to quaternary structure, monomer. Component of the 2-(3-amino-3-carboxypropyl)histidine synthase complex composed of dph1, dph2, dph3 and a NADH-dependent reductase, predominantly cbr1. Requires FAD as cofactor.

It is found in the mitochondrion outer membrane. It catalyses the reaction 2 Fe(III)-[cytochrome b5] + NADH = 2 Fe(II)-[cytochrome b5] + NAD(+) + H(+). It carries out the reaction 2 Fe(3+)-[Dph3] + NADH = 2 Fe(2+)-[Dph3] + NAD(+) + H(+). The protein operates within protein modification; peptidyl-diphthamide biosynthesis. Its function is as follows. NADH-dependent reductase for dph3 and cytochrome b5. Required for the first step of diphthamide biosynthesis, a post-translational modification of histidine which occurs in elongation factor 2. Dph1 and dph2 transfer a 3-amino-3-carboxypropyl (ACP) group from S-adenosyl-L-methionine (SAM) to a histidine residue, the reaction is assisted by a reduction system comprising dph3 and a NADH-dependent reductase, predominantly cbr1. By reducing dph3, also involved in the formation of the tRNA wobble base modification mcm5s 2U (5-methoxycarbonylmethyl-2-thiouridine), mediated by the elongator complex. The cytochrome b5/NADH cytochrome b5 reductase electron transfer system supports the catalytic activity of several sterol biosynthetic enzymes. The protein is NADH-cytochrome b5 reductase 1 (cbr1) of Aspergillus fumigatus (strain ATCC MYA-4609 / CBS 101355 / FGSC A1100 / Af293) (Neosartorya fumigata).